The following is a 1450-amino-acid chain: Sister chromatid cohesion protein PDS5 homolog (1450 aa).

3 disordered regions span residues 1–145, 680–707, and 1340–1450; these read MATR…KETK, VGGSTTPTSKKSQPPQQQQQQQQQQQQQ, and LPPL…EVEN. The span at 45-59 shows a compositional bias: acidic residues; that stretch reads DDGELDSDIDEEDES. The span at 77–138 shows a compositional bias: low complexity; it reads KTQQQPQKSI…TSSSSQQSTQ (62 aa). The stretch at 650–716 forms a coiled coil; that stretch reads KQLFKKYLEE…QLQQPENDIE (67 aa). Polar residues predominate over residues 682-691; the sequence is GSTTPTSKKS. 2 stretches are compositionally biased toward low complexity: residues 692–707 and 1350–1363; these read QPPQQQQQQQQQQQQQ and NNNNNNNNTNSTNN. Positions 1369-1378 are enriched in basic and acidic residues; that stretch reads DENNNNKNDN. The segment covering 1387–1401 has biased composition (low complexity); the sequence is NSTTAVPQKSIISKP. Positions 1402–1427 are enriched in basic residues; it reads PAKKVSKKAAAKQKSPKKKTNKKKKQ. Positions 1430 to 1450 are enriched in acidic residues; sequence SEEEVSSSEEEDESQDEEVEN.

It belongs to the PDS5 family.

The protein resides in the nucleus. Its function is as follows. May regulate sister chromatid cohesion during mitosis and couple it to DNA replication. This Dictyostelium discoideum (Social amoeba) protein is Sister chromatid cohesion protein PDS5 homolog.